A 194-amino-acid chain; its full sequence is UPF0215 protein TV0037 (194 aa).

It belongs to the UPF0215 family.

The polypeptide is UPF0215 protein TV0037 (Thermoplasma volcanium (strain ATCC 51530 / DSM 4299 / JCM 9571 / NBRC 15438 / GSS1)).